We begin with the raw amino-acid sequence, 363 residues long: 5-hydroxytryptamine receptor 1E (363 aa).

Residues 1–21 (MNITNCTTEASMAIRPKTITE) lie on the Extracellular side of the membrane. Asparagine 2 and asparagine 5 each carry an N-linked (GlcNAc...) asparagine glycan. The chain crosses the membrane as a helical span at residues 22 to 45 (KMLICMTLVVITTLTTLLNLAVIM). Residues 46–59 (AIGTTKKLHQPANY) are Cytoplasmic-facing. A helical transmembrane segment spans residues 60 to 84 (LICSLAVTDLLVAVLVMPLSIIYIV). Residues 85-92 (MDRWKLGY) are Extracellular-facing. Residues 93–118 (FLCEVWLSVDMTCCTCSILHLCVIAL) form a helical membrane-spanning segment. Cysteine 95 and cysteine 173 are joined by a disulfide. The serotonin site is built by aspartate 102 and cysteine 106. The DRY motif; important for ligand-induced conformation changes motif lies at 119–121 (DRY). At 119–138 (DRYWAITNAIEYARKRTAKR) the chain is on the cytoplasmic side. The helical transmembrane segment at 139 to 157 (AALMILTVWTISIFISMPP) threads the bilayer. Topologically, residues 158–179 (LFWRSHRRLSPPPSQCTIQHDH) are extracellular. The chain crosses the membrane as a helical span at residues 180–203 (VIYTIYSTLGAFYIPLTLILILYY). The Cytoplasmic portion of the chain corresponds to 204 to 291 (RIYHAAKSLY…SSTRERKAAR (88 aa)). The chain crosses the membrane as a helical span at residues 292-316 (ILGLILGAFILSWLPFFIKELIVGL). Residues 317 to 322 (SIYTVS) are Extracellular-facing. Residues 323 to 345 (SEVADFLTWLGYVNSLINPLLYT) traverse the membrane as a helical segment. Positions 340–344 (NPLLY) match the NPxxY motif; important for ligand-induced conformation changes and signaling motif. At 346 to 363 (SFNEDFKLAFKKLIRCRE) the chain is on the cytoplasmic side.

Belongs to the G-protein coupled receptor 1 family.

The protein localises to the cell membrane. G-protein coupled receptor for 5-hydroxytryptamine (serotonin). Also functions as a receptor for various alkaloids and psychoactive substances. Ligand binding causes a conformation change that triggers signaling via guanine nucleotide-binding proteins (G proteins) and modulates the activity of downstream effectors, such as adenylate cyclase. HTR1E is coupled to G(i)/G(o) G alpha proteins and mediates inhibitory neurotransmission by inhibiting adenylate cyclase activity. The sequence is that of 5-hydroxytryptamine receptor 1E (HTR1E) from Pan troglodytes (Chimpanzee).